A 360-amino-acid polypeptide reads, in one-letter code: DnaJ homolog subfamily C member 25 (360 aa).

Residues 20–40 traverse the membrane as a helical segment; it reads WMLLAPLLPALLLVRPAGALV. Residues 49–124 form the J domain; it reads DCYEVLGVSR…ETRKDYDYML (76 aa). 2 helical membrane-spanning segments follow: residues 150-170 and 244-264; these read VVIL…WWNS and LLLF…VWYC.

This sequence belongs to the DNAJC25 family.

Its subcellular location is the membrane. The protein is DnaJ homolog subfamily C member 25 (DNAJC25) of Homo sapiens (Human).